A 334-amino-acid polypeptide reads, in one-letter code: PDZ domain-containing protein MAGIX (334 aa).

Composition is skewed to basic and acidic residues over residues 1 to 13 and 209 to 224; these read MEPRTGDAADPRG and LETHPGKPRGVGEPRK. 2 disordered regions span residues 1–26 and 209–306; these read MEPRTGDAADPRGSRGGRGPSPLAGP and LETH…WLVP. In terms of domain architecture, PDZ spans 125–209; the sequence is SVELVRGYAG…QLHLVIRRPL (85 aa). Residues 244 to 260 show a composition bias toward polar residues; sequence GSRSSSTSLVQHPPSRT. Phosphoserine is present on serine 272.

The chain is PDZ domain-containing protein MAGIX (MAGIX) from Homo sapiens (Human).